The chain runs to 197 residues: ATP-dependent Clp protease proteolytic subunit 1 (197 aa).

Histidine 126 is an active-site residue.

Belongs to the peptidase S14 family. As to quaternary structure, fourteen ClpP subunits assemble into 2 heptameric rings which stack back to back to give a disk-like structure with a central cavity, resembling the structure of eukaryotic proteasomes.

It localises to the cytoplasm. The catalysed reaction is Hydrolysis of proteins to small peptides in the presence of ATP and magnesium. alpha-casein is the usual test substrate. In the absence of ATP, only oligopeptides shorter than five residues are hydrolyzed (such as succinyl-Leu-Tyr-|-NHMec, and Leu-Tyr-Leu-|-Tyr-Trp, in which cleavage of the -Tyr-|-Leu- and -Tyr-|-Trp bonds also occurs).. Cleaves peptides in various proteins in a process that requires ATP hydrolysis. Has a chymotrypsin-like activity. Plays a major role in the degradation of misfolded proteins. The sequence is that of ATP-dependent Clp protease proteolytic subunit 1 from Nocardia farcinica (strain IFM 10152).